The chain runs to 366 residues: MGESIMKKAKEDAPSVDDSKKLAIEQAMSQIEKQFGKGSIMKLGSDSAKQTVQVIPSGSLDLDIALGIGGYPIGRIVEIYGPESSGKTTLTLSAIAEAQKRGGVAAFIDAEHALDPSYAKKLGVNIDELLVSQPDNGEEALEICESLVRSNAIDLIVIDSVAALVPKAEIEGDMGDSHMGLQARLMSQALRKLTGTIAKSKTVVIFINQIRMKIGVMFGSPETTTGGNALKFYCSVRLDIRKIETIKEKEESVGNRVRVKVVKNKCAPPFKQAEFDIIFNAGISREGSLVDLGVKHDIIHKAGAWYSYNTEKIGQGKEAAKEYLKNNPEIALTIENMVRDLNSLPLLVQENNKKSRKEEKLEQAAG.

Position 81-88 (81-88) interacts with ATP; it reads GPESSGKT.

The protein belongs to the RecA family.

It is found in the cytoplasm. Functionally, can catalyze the hydrolysis of ATP in the presence of single-stranded DNA, the ATP-dependent uptake of single-stranded DNA by duplex DNA, and the ATP-dependent hybridization of homologous single-stranded DNAs. It interacts with LexA causing its activation and leading to its autocatalytic cleavage. This is Protein RecA from Leptospira interrogans serogroup Icterohaemorrhagiae serovar copenhageni (strain Fiocruz L1-130).